A 359-amino-acid polypeptide reads, in one-letter code: Membrane-bound lytic murein transglycosylase C (359 aa).

A signal peptide spans 1–16 (MKKYLALALIAPLLIS). A lipid anchor (N-palmitoyl cysteine) is attached at cysteine 17. The S-diacylglycerol cysteine moiety is linked to residue cysteine 17.

It belongs to the transglycosylase Slt family.

It is found in the cell outer membrane. The enzyme catalyses Exolytic cleavage of the (1-&gt;4)-beta-glycosidic linkage between N-acetylmuramic acid (MurNAc) and N-acetylglucosamine (GlcNAc) residues in peptidoglycan, from either the reducing or the non-reducing ends of the peptidoglycan chains, with concomitant formation of a 1,6-anhydrobond in the MurNAc residue.. Functionally, murein-degrading enzyme. May play a role in recycling of muropeptides during cell elongation and/or cell division. In Shigella flexneri serotype 5b (strain 8401), this protein is Membrane-bound lytic murein transglycosylase C.